Consider the following 505-residue polypeptide: 2-isopropylmalate synthase (505 aa).

The Pyruvate carboxyltransferase domain occupies 5–267 (VYIFDTTLRD…YTNIKTEEIY (263 aa)). Positions 14, 202, 204, and 238 each coordinate Mn(2+). The interval 391–505 (TLEYLHISSG…VNKLIWDSQK (115 aa)) is regulatory domain.

The protein belongs to the alpha-IPM synthase/homocitrate synthase family. LeuA type 1 subfamily. As to quaternary structure, homodimer. The cofactor is Mn(2+).

It is found in the cytoplasm. It carries out the reaction 3-methyl-2-oxobutanoate + acetyl-CoA + H2O = (2S)-2-isopropylmalate + CoA + H(+). The protein operates within amino-acid biosynthesis; L-leucine biosynthesis; L-leucine from 3-methyl-2-oxobutanoate: step 1/4. In terms of biological role, catalyzes the condensation of the acetyl group of acetyl-CoA with 3-methyl-2-oxobutanoate (2-ketoisovalerate) to form 3-carboxy-3-hydroxy-4-methylpentanoate (2-isopropylmalate). In Pelotomaculum thermopropionicum (strain DSM 13744 / JCM 10971 / SI), this protein is 2-isopropylmalate synthase.